The chain runs to 714 residues: Fatty acid oxidation complex subunit alpha (714 aa).

Residues M1–P190 form an enoyl-CoA hydratase region. The 3-hydroxyacyl-CoA dehydrogenase stretch occupies residues A306–Q714.

The protein in the N-terminal section; belongs to the enoyl-CoA hydratase/isomerase family. It in the central section; belongs to the 3-hydroxyacyl-CoA dehydrogenase family. Heterotetramer of two alpha chains (FadJ) and two beta chains (FadI).

It is found in the cytoplasm. The enzyme catalyses a (3S)-3-hydroxyacyl-CoA = a (2E)-enoyl-CoA + H2O. The catalysed reaction is a 4-saturated-(3S)-3-hydroxyacyl-CoA = a (3E)-enoyl-CoA + H2O. It carries out the reaction a (3S)-3-hydroxyacyl-CoA + NAD(+) = a 3-oxoacyl-CoA + NADH + H(+). It catalyses the reaction (3S)-3-hydroxybutanoyl-CoA = (3R)-3-hydroxybutanoyl-CoA. The protein operates within lipid metabolism; fatty acid beta-oxidation. In terms of biological role, catalyzes the formation of a hydroxyacyl-CoA by addition of water on enoyl-CoA. Also exhibits 3-hydroxyacyl-CoA epimerase and 3-hydroxyacyl-CoA dehydrogenase activities. Strongly involved in the anaerobic degradation of long and medium-chain fatty acids in the presence of nitrate and weakly involved in the aerobic degradation of long-chain fatty acids. The chain is Fatty acid oxidation complex subunit alpha (fadJ) from Escherichia coli (strain K12).